A 188-amino-acid polypeptide reads, in one-letter code: Nicotinamide-nucleotide adenylyltransferase (188 aa).

It belongs to the archaeal NMN adenylyltransferase family.

It localises to the cytoplasm. It carries out the reaction beta-nicotinamide D-ribonucleotide + ATP + H(+) = diphosphate + NAD(+). It participates in cofactor biosynthesis; NAD(+) biosynthesis; NAD(+) from nicotinamide D-ribonucleotide: step 1/1. This chain is Nicotinamide-nucleotide adenylyltransferase, found in Pyrococcus furiosus (strain ATCC 43587 / DSM 3638 / JCM 8422 / Vc1).